The chain runs to 217 residues: Large ribosomal subunit protein uL4 (217 aa).

This sequence belongs to the universal ribosomal protein uL4 family. In terms of assembly, part of the 50S ribosomal subunit.

Its function is as follows. One of the primary rRNA binding proteins, this protein initially binds near the 5'-end of the 23S rRNA. It is important during the early stages of 50S assembly. It makes multiple contacts with different domains of the 23S rRNA in the assembled 50S subunit and ribosome. Functionally, forms part of the polypeptide exit tunnel. The protein is Large ribosomal subunit protein uL4 of Koribacter versatilis (strain Ellin345).